Here is a 62-residue protein sequence, read N- to C-terminus: Large ribosomal subunit protein bL28 (62 aa).

A disordered region spans residues 1–24 (MGKQCFVTGRKASTGNNRSHALNS). Polar residues predominate over residues 11–24 (KASTGNNRSHALNS).

The protein belongs to the bacterial ribosomal protein bL28 family.

In Staphylococcus saprophyticus subsp. saprophyticus (strain ATCC 15305 / DSM 20229 / NCIMB 8711 / NCTC 7292 / S-41), this protein is Large ribosomal subunit protein bL28.